We begin with the raw amino-acid sequence, 266 residues long: MADGEGGAASAPTAGTRPVYRRVLLKLGGEMFGGGHVGVDPDIVASIARQIAAVVAEGVQMAVVIGGGNFFRGAELSVRGMDRARSDYMGMLGTVMNCLALQDFLEKLGVDTRVQTAITMGQVAEPYIPRRAIRHMEKGRVVIFGAGLGAPYFSTDTTAAQRALEIGAEVVLMAKAVDGVYDSDPKTNADAVRFDHLDYDEVLARDLKFADATAISLCRDNGMPIIVFNLLEEGNIARAVHGEKIGTIVSSGDGVPPRRQAVSPAR.

26–29 (KLGG) contacts ATP. Gly67 serves as a coordination point for UMP. Residues Gly68 and Arg72 each coordinate ATP. Residues Asp87 and 148 to 155 (LGAPYFST) contribute to the UMP site. Residues Tyr181 and Asp184 each coordinate ATP.

This sequence belongs to the UMP kinase family. In terms of assembly, homohexamer.

The protein localises to the cytoplasm. It catalyses the reaction UMP + ATP = UDP + ADP. The protein operates within pyrimidine metabolism; CTP biosynthesis via de novo pathway; UDP from UMP (UMPK route): step 1/1. With respect to regulation, inhibited by UTP. Functionally, catalyzes the reversible phosphorylation of UMP to UDP. This chain is Uridylate kinase, found in Acidothermus cellulolyticus (strain ATCC 43068 / DSM 8971 / 11B).